We begin with the raw amino-acid sequence, 23 residues long: U22-ctenitoxin-Co1a (23 aa).

Expressed by the venom gland.

Its subcellular location is the secreted. The polypeptide is U22-ctenitoxin-Co1a (Ctenus ornatus (Brazilian spider)).